Reading from the N-terminus, the 204-residue chain is Guanine-specific ADP-ribosyl transferase (204 aa).

Residues 1–42 (MITTSLRRRTAAAVLSLSAVLATTAATAPGAAPAPSAAPAKA) form the signal peptide. Cys46 and Cys76 are disulfide-bonded. Residues 81-85 (RSDSR) and Lys98 contribute to the NADH site. GDP-binding positions include 111–114 (VLVN), 132–134 (WYK), Trp159, and Gln162. A PN (phosphate-nicotinamide) loop motif is present at residues 132–136 (WYKSG). A disulfide bridge connects residues Cys180 and Cys194.

It belongs to the pierisin ADP-ribosyltransferase family. As to quaternary structure, monomer.

The protein resides in the secreted. The catalysed reaction is guanosine + NAD(+) = N(2)-(ADP-D-ribosyl)-guanosine + nicotinamide + H(+). The enzyme catalyses a 2'-deoxyguanosine in DNA + NAD(+) = an N(2)-(ADP-L-ribosyl)-2'-deoxyguanosine in DNA + nicotinamide + H(+). It catalyses the reaction 2'-deoxyguanosine + NAD(+) = N(2)-(ADP-D-ribosyl)-2'-deoxyguanosine + nicotinamide + H(+). It carries out the reaction GMP + NAD(+) = N(2)-(ADP-D-ribosyl)-GMP + nicotinamide + H(+). The catalysed reaction is GTP + NAD(+) = N(2)-(ADP-D-ribosyl)-GTP + nicotinamide + H(+). The enzyme catalyses dGMP + NAD(+) = N(2)-(ADP-D-ribosyl)-dGMP + nicotinamide + H(+). It catalyses the reaction dGTP + NAD(+) = N(2)-(ADP-D-ribosyl)-dGTP + nicotinamide + H(+). It carries out the reaction 3',5'-cyclic GMP + NAD(+) = N(2)-(ADP-D-ribosyl)-3',5'-cyclic GMP + nicotinamide + H(+). The catalysed reaction is guanine + NAD(+) = N(2)-(ADP-D-ribosyl)-guanine + nicotinamide + H(+). The enzyme catalyses GDP + NAD(+) = N(2)-(ADP-D-ribosyl)-GDP + nicotinamide + H(+). Inhibited by NADH. Functionally, ADP-ribosylates the N2 amino group of guanosine, deoxyguanosine, GMP, dGMP, cGMP, GTP and dGTP; oligo-guanosine, oligo-deoxyguanosine and tRNA are ADP-ribosylated less efficiently, while dsDNA is a very poor substrate. Also acts on GDP. This is Guanine-specific ADP-ribosyl transferase from Streptomyces coelicolor (strain ATCC BAA-471 / A3(2) / M145).